Reading from the N-terminus, the 344-residue chain is Unsaturated rhamnogalacturonyl hydrolase YesR (344 aa).

Substrate-binding positions include 30 to 31 (DW), Asn-74, and 118 to 128 (QHTVNAAEYVF). Catalysis depends on Asp-135, which acts as the Proton donor. Residues 198 to 202 (RANGW) and 308 to 309 (NA) contribute to the substrate site.

Belongs to the glycosyl hydrolase 105 family. In terms of assembly, monomer.

The protein localises to the cytoplasm. The catalysed reaction is 2-O-(4-deoxy-beta-L-threo-hex-4-enopyranuronosyl)-alpha-L-rhamnose + H2O = 5-dehydro-4-deoxy-D-glucuronate + L-rhamnopyranose. Its function is as follows. Catalyzes the hydrolysis of unsaturated rhamnogalacturonan disaccharide to yield unsaturated D-galacturonic acid and L-rhamnose. It cannot act on unsaturated glucuronyl hydrolase (UGL) substrates containing unsaturated D-glucuronic acid at the non-reducing terminus, although the active pockets of YesR and UGL are very similar. This Bacillus subtilis (strain 168) protein is Unsaturated rhamnogalacturonyl hydrolase YesR (yesR).